The following is a 214-amino-acid chain: MQLFHLCLIISCTCPTIQASKLCLGWLWGMDIDPYKEFGATVELLSFLPSDFFPSVRDLLDTASALYREALESPEHCSPHHTALRQAILCWGDVTNLATWVGTNLDDPASRDLVVNYVNTNMGLKIRQLLWFHISCLTFGRETVLEYLVSFGVWIRTPPAYRPPNAPILSTLPETTVVRRRDRGRSPRRRTPSPRRRRSQSPRRRRSQSRESQC.

The N-terminal stretch at methionine 1 to alanine 19 is a signal peptide. Positions glycine 25–leucine 27 are HBEAG. Positions asparagine 165 to cysteine 214 are disordered. Over residues valine 178 to serine 207 the composition is skewed to basic residues. Residues serine 186–proline 192 form a 1; half-length repeat. Positions serine 186 to glutamine 208 are 3 X 8 AA repeats of S-P-R-R-R-R-S-Q. Positions serine 186 to cysteine 214 are excised as a propeptide. 2 consecutive repeat copies span residues serine 193–glutamine 200 and serine 201–glutamine 208.

The protein belongs to the orthohepadnavirus precore antigen family. In terms of assembly, homodimerizes. Post-translationally, phosphorylated. Cleaved by host furin.

The protein localises to the secreted. It is found in the host nucleus. In terms of biological role, may regulate immune response to the intracellular capsid in acting as a T-cell tolerogen, by having an immunoregulatory effect which prevents destruction of infected cells by cytotoxic T-cells. This immune regulation may predispose to chronicity during perinatal infections and prevent severe liver injury during adult infections. In Homo sapiens (Human), this protein is External core antigen.